The sequence spans 1374 residues: Probable ATP-dependent RNA helicase spindle-E (1374 aa).

One can recognise a Helicase ATP-binding domain in the interval 46–212 (LARIRENPVI…FKTPKKVGYL (167 aa)). Residue 59–66 (GPTGCGKT) participates in ATP binding. Positions 158-161 (DEIH) match the DEAH box motif. Positions 265-447 (VCDRLIENMH…NVILKAKLLE (183 aa)) constitute a Helicase C-terminal domain. A Tudor domain is found at 866-931 (QFAVGQMVAA…RKLDGPLAYM (66 aa)).

It belongs to the DEAD box helicase family. DEAH subfamily.

It localises to the cytoplasm. The enzyme catalyses ATP + H2O = ADP + phosphate + H(+). Functionally, probable ATP-binding RNA helicase which plays a central role during gametogenesis by repressing transposable elements and preventing their mobilization, which is essential for the germline integrity. Acts via the piRNA metabolic process, which mediates the repression of transposable elements during meiosis by forming complexes composed of piRNAs and Piwi proteins and govern the methylation and subsequent repression of transposons. This chain is Probable ATP-dependent RNA helicase spindle-E (spn-E), found in Aedes aegypti (Yellowfever mosquito).